The sequence spans 140 residues: Nucleoside diphosphate kinase (140 aa).

ATP contacts are provided by Lys11, Phe59, Arg87, Thr93, Arg104, and Asn114. The active-site Pros-phosphohistidine intermediate is the His117.

It belongs to the NDK family. In terms of assembly, homotetramer. It depends on Mg(2+) as a cofactor.

Its subcellular location is the cytoplasm. It carries out the reaction a 2'-deoxyribonucleoside 5'-diphosphate + ATP = a 2'-deoxyribonucleoside 5'-triphosphate + ADP. The enzyme catalyses a ribonucleoside 5'-diphosphate + ATP = a ribonucleoside 5'-triphosphate + ADP. Its function is as follows. Major role in the synthesis of nucleoside triphosphates other than ATP. The ATP gamma phosphate is transferred to the NDP beta phosphate via a ping-pong mechanism, using a phosphorylated active-site intermediate. The protein is Nucleoside diphosphate kinase of Francisella philomiragia subsp. philomiragia (strain ATCC 25017 / CCUG 19701 / FSC 153 / O#319-036).